A 280-amino-acid polypeptide reads, in one-letter code: 3,2-trans-enoyl-CoA isomerase (280 aa).

Residues 68–72 and leucine 126 each bind substrate; that span reads SGADF. The active-site Proton donor/acceptor is the glutamate 158. Residues 278 to 280 carry the Microbody targeting signal motif; that stretch reads HRL.

The protein belongs to the enoyl-CoA hydratase/isomerase family. In terms of assembly, homohexamer, dimer of trimers. Interacts with DCI1.

The protein localises to the peroxisome. It carries out the reaction a (3Z)-enoyl-CoA = a 4-saturated (2E)-enoyl-CoA. The enzyme catalyses a (3E)-enoyl-CoA = a 4-saturated (2E)-enoyl-CoA. The protein operates within lipid metabolism; fatty acid beta-oxidation. Its function is as follows. Essential for the beta oxidation of unsaturated fatty acids. The protein is 3,2-trans-enoyl-CoA isomerase (ECI1) of Saccharomyces cerevisiae (strain ATCC 204508 / S288c) (Baker's yeast).